The following is a 148-amino-acid chain: Snaclec B4 (148 aa).

The N-terminal stretch at 1 to 24 (MGRIIFVSFGLLVVFLSLSGTGAA) is a signal peptide. 3 cysteine pairs are disulfide-bonded: C27/C38, C55/C144, and C121/C136. Residues 34–145 (YDQHCYKVFD…CRLLGHFVCK (112 aa)) enclose the C-type lectin domain.

This sequence belongs to the snaclec family. As to quaternary structure, heterodimer; disulfide-linked. Expressed by the venom gland.

The protein localises to the secreted. Its function is as follows. Interferes with one step of hemostasis (modulation of platelet aggregation, or coagulation cascade, for example). The sequence is that of Snaclec B4 from Macrovipera lebetinus (Levantine viper).